The chain runs to 496 residues: Alanine aminotransferase 1 (496 aa).

Alanine 2 carries the N-acetylalanine modification. Position 22 is a phosphothreonine (threonine 22). An N6-(pyridoxal phosphate)lysine modification is found at lysine 314.

This sequence belongs to the class-I pyridoxal-phosphate-dependent aminotransferase family. Alanine aminotransferase subfamily. Homodimer. It depends on pyridoxal 5'-phosphate as a cofactor. Liver, kidney, heart, and skeletal muscles. Expressed at moderate levels in the adipose tissue.

It is found in the cytoplasm. It catalyses the reaction L-alanine + 2-oxoglutarate = pyruvate + L-glutamate. It participates in amino-acid degradation; L-alanine degradation via transaminase pathway; pyruvate from L-alanine: step 1/1. In terms of biological role, catalyzes the reversible transamination between alanine and 2-oxoglutarate to form pyruvate and glutamate. Participates in cellular nitrogen metabolism and also in liver gluconeogenesis starting with precursors transported from skeletal muscles. In Homo sapiens (Human), this protein is Alanine aminotransferase 1 (GPT).